A 164-amino-acid chain; its full sequence is Putative protein ZNF321 (164 aa).

The chain is Putative protein ZNF321 (ZNF321P) from Homo sapiens (Human).